Here is a 350-residue protein sequence, read N- to C-terminus: Ion-translocating oxidoreductase complex subunit D (350 aa).

Helical transmembrane passes span 25–45 (ILCA…GTVI), 89–109 (IPPL…IVIV), and 129–149 (VMLL…SVIA). Thr185 carries the post-translational modification FMN phosphoryl threonine. A run of 5 helical transmembrane segments spans residues 212–232 (GFGV…LVML), 239–259 (WHIT…GYLL), 264–284 (FTGP…FFIA), 298–318 (LVFG…GGYP), and 319–339 (DAFA…DHYM).

Belongs to the NqrB/RnfD family. As to quaternary structure, the complex is composed of six subunits: RnfA, RnfB, RnfC, RnfD, RnfE and RnfG. FMN is required as a cofactor.

The protein resides in the cell inner membrane. In terms of biological role, part of a membrane-bound complex that couples electron transfer with translocation of ions across the membrane. This is Ion-translocating oxidoreductase complex subunit D from Shewanella sediminis (strain HAW-EB3).